Reading from the N-terminus, the 159-residue chain is Ribosomal RNA large subunit methyltransferase H (159 aa).

S-adenosyl-L-methionine-binding positions include leucine 76, glycine 108, and 127-132 (FSKMTF).

The protein belongs to the RNA methyltransferase RlmH family. In terms of assembly, homodimer.

It is found in the cytoplasm. The catalysed reaction is pseudouridine(1915) in 23S rRNA + S-adenosyl-L-methionine = N(3)-methylpseudouridine(1915) in 23S rRNA + S-adenosyl-L-homocysteine + H(+). Specifically methylates the pseudouridine at position 1915 (m3Psi1915) in 23S rRNA. The sequence is that of Ribosomal RNA large subunit methyltransferase H from Clostridium botulinum (strain 657 / Type Ba4).